A 792-amino-acid polypeptide reads, in one-letter code: MNNQRKKTGNPSFNMLKRARNRVSTGSQLAKRFSKGLLSGQGPMKLVMAFVAFLRFLAIPPTAGILKRWGSFKKNGAINVLRGFRKEISNMLNIMNRRRRSVTMILMLLPTALAFHLTTRGGEPTLIVSKQERGKSLLFKTSAGVNMCTLIAMDLGELCEDTMTYKCPRMTEAEPDDVDCWCNATDTWVTYGTCSQTGEHRRDKRSVALDPHVGLGLETRTETWMSSEGAWKQIQKVETWALRHPGFTVIGLFLAHAIGTSITQKGIIFILLMLVTPSMAMRCVGIGNRDFVEGLSGATWVDVVLEHGSCVTTMAKNKPTLDIELLKTEVTNPAVLRKLCIEAKISNTTTDSRCPTQGEATLVEEQDTNFVCRRTFVDRGWGNGCGLFGKGSLITCAKFKCVTKLEGKIVQYENLKYSVIVTVHTGDQHQVGNETTEHGTIATITPQAPTSEIQLTDYGALTLDCSPRTGLDFNRVVLLTMKKKSWLVHKQWFLDLPLPWTSGASTSQETWNRQDLLVTFKTAHAKKQEVVVLGSQEGAMHTALTGATEIQTSGTTTIFAGHLKCRLKMDKLTLKGVSYVMCTGSFKLEKEVAETQHGTVLVQVKYEGTDAPCKIPFSSQDEKGVTQNGRLITANPIVIDKEKPVNIEAEPPFGESYIVVGAGEKALKLSWFKKGSSIGKMFEATARGARRMAILGDTAWDFGSIGGVFTSVGKLIHQIFGTAYGVLFSGVSWTMKIGIGILLTWLGLNSRSTSLSMTCIAVGMVTLYLGVMVQADSGCVINWKGKELKCGS.

Residues 1 to 15 (MNNQRKKTGNPSFNM) form an interaction with host EXOC1 region. Residues 1-101 (MNNQRKKTGN…LNIMNRRRRS (101 aa)) lie on the Cytoplasmic side of the membrane. The interval 37–72 (LLSGQGPMKLVMAFVAFLRFLAIPPTAGILKRWGSF) is hydrophobic; homodimerization of capsid protein C. Positions 101-114 (SVTMILMLLPTALA) are cleaved as a propeptide — ER anchor for the capsid protein C, removed in mature form by serine protease NS3. The helical transmembrane segment at 102–119 (VTMILMLLPTALAFHLTT) threads the bilayer. The Extracellular portion of the chain corresponds to 120–242 (RGGEPTLIVS…QIQKVETWAL (123 aa)). An N-linked (GlcNAc...) asparagine; by host glycan is attached at Asn-183. A helical membrane pass occupies residues 243-260 (RHPGFTVIGLFLAHAIGT). A topological domain (cytoplasmic) is located at residue Ser-261. The chain crosses the membrane as a helical span at residues 262–280 (ITQKGIIFILLMLVTPSMA). The Extracellular segment spans residues 281–725 (MRCVGIGNRD…IHQIFGTAYG (445 aa)). Cystine bridges form between Cys-283–Cys-310, Cys-340–Cys-401, Cys-354–Cys-385, and Cys-372–Cys-396. Residue Asn-347 is glycosylated (N-linked (GlcNAc...) asparagine; by host). The fusion peptide stretch occupies residues 378–391 (DRGWGNGCGLFGKG). A glycan (N-linked (GlcNAc...) asparagine; by host) is linked at Asn-433. 2 cysteine pairs are disulfide-bonded: Cys-465–Cys-565 and Cys-582–Cys-613. A helical membrane pass occupies residues 726-746 (VLFSGVSWTMKIGIGILLTWL). The Cytoplasmic portion of the chain corresponds to 747–752 (GLNSRS). A helical transmembrane segment spans residues 753-775 (TSLSMTCIAVGMVTLYLGVMVQA). Over 776 to 792 (DSGCVINWKGKELKCGS) the chain is Extracellular. Cys-779 and Cys-790 are disulfide-bonded.

Homodimer. Interacts (via N-terminus) with host EXOC1 (via C-terminus); this interaction results in EXOC1 degradation through the proteasome degradation pathway. In terms of assembly, forms heterodimers with envelope protein E in the endoplasmic reticulum and Golgi. As to quaternary structure, homodimer; in the endoplasmic reticulum and Golgi. Interacts with protein prM. Interacts with non-structural protein 1. Homodimer; Homohexamer when secreted. Interacts with envelope protein E. Post-translationally, specific enzymatic cleavages in vivo yield mature proteins. Cleavages in the lumen of endoplasmic reticulum are performed by host signal peptidase, wereas cleavages in the cytoplasmic side are performed by serine protease NS3. Signal cleavage at the 2K-4B site requires a prior NS3 protease-mediated cleavage at the 4A-2K site. In terms of processing, N-glycosylated. N-glycosylated. The excreted form is glycosylated and this is required for efficient secretion of the protein from infected cells.

It is found in the virion. The protein localises to the host nucleus. The protein resides in the host cytoplasm. It localises to the host perinuclear region. Its subcellular location is the secreted. It is found in the virion membrane. The protein localises to the host endoplasmic reticulum membrane. Plays a role in virus budding by binding to the cell membrane and gathering the viral RNA into a nucleocapsid that forms the core of a mature virus particle. During virus entry, may induce genome penetration into the host cytoplasm after hemifusion induced by the surface proteins. Can migrate to the cell nucleus where it modulates host functions. Overcomes the anti-viral effects of host EXOC1 by sequestering and degrading the latter through the proteasome degradation pathway. In terms of biological role, inhibits RNA silencing by interfering with host Dicer. Functionally, prevents premature fusion activity of envelope proteins in trans-Golgi by binding to envelope protein E at pH6.0. After virion release in extracellular space, gets dissociated from E dimers. Its function is as follows. Acts as a chaperone for envelope protein E during intracellular virion assembly by masking and inactivating envelope protein E fusion peptide. prM is the only viral peptide matured by host furin in the trans-Golgi network probably to avoid catastrophic activation of the viral fusion activity in acidic Golgi compartment prior to virion release. prM-E cleavage is inefficient, and many virions are only partially matured. These uncleaved prM would play a role in immune evasion. May play a role in virus budding. Exerts cytotoxic effects by activating a mitochondrial apoptotic pathway through M ectodomain. May display a viroporin activity. In terms of biological role, binds to host cell surface receptor and mediates fusion between viral and cellular membranes. Envelope protein is synthesized in the endoplasmic reticulum in the form of heterodimer with protein prM. They play a role in virion budding in the ER, and the newly formed immature particle is covered with 60 spikes composed of heterodimer between precursor prM and envelope protein E. The virion is transported to the Golgi apparatus where the low pH causes dissociation of PrM-E heterodimers and formation of E homodimers. prM-E cleavage is inefficient, and many virions are only partially matured. These uncleaved prM would play a role in immune evasion. Functionally, involved in immune evasion, pathogenesis and viral replication. Once cleaved off the polyprotein, is targeted to three destinations: the viral replication cycle, the plasma membrane and the extracellular compartment. Essential for viral replication. Required for formation of the replication complex and recruitment of other non-structural proteins to the ER-derived membrane structures. Excreted as a hexameric lipoparticle that plays a role against host immune response. Antagonizing the complement function. Binds to the host macrophages and dendritic cells. Inhibits signal transduction originating from Toll-like receptor 3 (TLR3). Its function is as follows. Disrupts the host endothelial glycocalyx layer of host pulmonary microvascular endothelial cells, inducing degradation of sialic acid and shedding of heparan sulfate proteoglycans. NS1 induces expression of sialidases, heparanase, and activates cathepsin L, which activates heparanase via enzymatic cleavage. These effects are probably linked to the endothelial hyperpermeability observed in severe dengue disease. This Aedes aegypti (Yellowfever mosquito) protein is Genome polyprotein.